Reading from the N-terminus, the 481-residue chain is 2-succinylbenzoate--CoA ligase (481 aa).

This sequence belongs to the ATP-dependent AMP-binding enzyme family. MenE subfamily.

The catalysed reaction is 2-succinylbenzoate + ATP + CoA = 2-succinylbenzoyl-CoA + AMP + diphosphate. It participates in quinol/quinone metabolism; 1,4-dihydroxy-2-naphthoate biosynthesis; 1,4-dihydroxy-2-naphthoate from chorismate: step 5/7. Its pathway is quinol/quinone metabolism; menaquinone biosynthesis. Converts 2-succinylbenzoate (OSB) to 2-succinylbenzoyl-CoA (OSB-CoA). This is 2-succinylbenzoate--CoA ligase from Bacillus mycoides (strain KBAB4) (Bacillus weihenstephanensis).